Reading from the N-terminus, the 50-residue chain is METTNFGFVASLLFVGVPTIFLIGLFISTQDGEKSSFYSDSSKGRLGPKR.

The chain crosses the membrane as a helical span at residues 7–27 (GFVASLLFVGVPTIFLIGLFI).

Belongs to the PsbM family. In terms of assembly, PSII is composed of 1 copy each of membrane proteins PsbA, PsbB, PsbC, PsbD, PsbE, PsbF, PsbH, PsbI, PsbJ, PsbK, PsbL, PsbM, PsbT, PsbX, PsbY, Psb30/Ycf12, peripheral proteins PsbO, CyanoQ (PsbQ), PsbU, PsbV and a large number of cofactors. It forms dimeric complexes.

It localises to the cellular thylakoid membrane. One of the components of the core complex of photosystem II (PSII). PSII is a light-driven water:plastoquinone oxidoreductase that uses light energy to abstract electrons from H(2)O, generating O(2) and a proton gradient subsequently used for ATP formation. It consists of a core antenna complex that captures photons, and an electron transfer chain that converts photonic excitation into a charge separation. This subunit is found at the monomer-monomer interface. The chain is Photosystem II reaction center protein M from Prochlorococcus marinus (strain MIT 9301).